The chain runs to 211 residues: C-type lectin domain family 2 member L (211 aa).

Residues 1-53 are disordered; that stretch reads MEPAREPPARARPPPPAARPAPAAPRPRSPAEAEARGPEGLLRRSGSGYEGST. A compositionally biased stretch (pro residues) spans 10 to 28; that stretch reads RARPPPPAARPAPAAPRPR. Ser29 is modified (phosphoserine). The helical transmembrane segment at 66–86 threads the bilayer; it reads LLLGAIAVLLFAILVVMSILA. Cystine bridges form between Cys97/Cys108, Cys125/Cys205, and Cys184/Cys197. The 103-residue stretch at 104–206 folds into the C-type lectin domain; that stretch reads YGRKCYYFSE…CLTTRPWVCS (103 aa).

It is found in the membrane. This is C-type lectin domain family 2 member L (Clec2l) from Rattus norvegicus (Rat).